The following is a 167-amino-acid chain: Transcription antitermination protein NusB (167 aa).

This sequence belongs to the NusB family.

Its function is as follows. Involved in transcription antitermination. Required for transcription of ribosomal RNA (rRNA) genes. Binds specifically to the boxA antiterminator sequence of the ribosomal RNA (rrn) operons. The protein is Transcription antitermination protein NusB of Nitrosomonas europaea (strain ATCC 19718 / CIP 103999 / KCTC 2705 / NBRC 14298).